Reading from the N-terminus, the 104-residue chain is ATP-dependent Clp protease adapter protein ClpS (104 aa).

Belongs to the ClpS family. In terms of assembly, binds to the N-terminal domain of the chaperone ClpA.

Functionally, involved in the modulation of the specificity of the ClpAP-mediated ATP-dependent protein degradation. This is ATP-dependent Clp protease adapter protein ClpS from Bordetella bronchiseptica (strain ATCC BAA-588 / NCTC 13252 / RB50) (Alcaligenes bronchisepticus).